The primary structure comprises 224 residues: Uracil-DNA glycosylase (224 aa).

Residue Asp62 is the Proton acceptor of the active site.

It belongs to the uracil-DNA glycosylase (UDG) superfamily. UNG family.

It localises to the cytoplasm. It carries out the reaction Hydrolyzes single-stranded DNA or mismatched double-stranded DNA and polynucleotides, releasing free uracil.. In terms of biological role, excises uracil residues from the DNA which can arise as a result of misincorporation of dUMP residues by DNA polymerase or due to deamination of cytosine. The chain is Uracil-DNA glycosylase from Aliivibrio fischeri (strain ATCC 700601 / ES114) (Vibrio fischeri).